The following is a 921-amino-acid chain: Isoleucine--tRNA ligase (921 aa).

The 'HIGH' region motif lies at 57-67; the sequence is PYANGDIHMGH. Glu-552 is an L-isoleucyl-5'-AMP binding site. The 'KMSKS' region signature appears at 593 to 597; sequence KMSKS. Lys-596 is an ATP binding site. 4 residues coordinate Zn(2+): Cys-888, Cys-891, Cys-908, and Cys-911.

Belongs to the class-I aminoacyl-tRNA synthetase family. IleS type 1 subfamily. As to quaternary structure, monomer. Requires Zn(2+) as cofactor.

The protein localises to the cytoplasm. The catalysed reaction is tRNA(Ile) + L-isoleucine + ATP = L-isoleucyl-tRNA(Ile) + AMP + diphosphate. Catalyzes the attachment of isoleucine to tRNA(Ile). As IleRS can inadvertently accommodate and process structurally similar amino acids such as valine, to avoid such errors it has two additional distinct tRNA(Ile)-dependent editing activities. One activity is designated as 'pretransfer' editing and involves the hydrolysis of activated Val-AMP. The other activity is designated 'posttransfer' editing and involves deacylation of mischarged Val-tRNA(Ile). The polypeptide is Isoleucine--tRNA ligase (Bacillus cytotoxicus (strain DSM 22905 / CIP 110041 / 391-98 / NVH 391-98)).